We begin with the raw amino-acid sequence, 112 residues long: UPF0145 protein RB3016 (112 aa).

Belongs to the UPF0145 family.

This is UPF0145 protein RB3016 from Rhodopirellula baltica (strain DSM 10527 / NCIMB 13988 / SH1).